Consider the following 716-residue polypeptide: Probable extracellular serine carboxypeptidase (716 aa).

The N-terminal stretch at 1 to 17 (MVKLTACLLLLVAAVQA) is a signal peptide. N-linked (GlcNAc...) asparagine glycosylation is found at N143 and N174. S188 functions as the Charge relay system in the catalytic mechanism. Residues N258 and N354 are each glycosylated (N-linked (GlcNAc...) asparagine). The Charge relay system role is filled by D466. 2 N-linked (GlcNAc...) asparagine glycosylation sites follow: N507 and N550. The disordered stretch occupies residues 617 to 636 (RDLAAQPSKSKKDRRGQQLS). A helical transmembrane segment spans residues 652 to 672 (LGFVSFLVFAFSSFTFIPDIE).

It belongs to the peptidase S28 family.

It localises to the membrane. Its subcellular location is the secreted. The protein is Probable extracellular serine carboxypeptidase of Arthroderma benhamiae (strain ATCC MYA-4681 / CBS 112371) (Trichophyton mentagrophytes).